Reading from the N-terminus, the 218-residue chain is Superoxide dismutase [Mn] 2, mitochondrial (218 aa).

The N-terminal 24 residues, 1–24 (MLQSTARTASKLVQPVAGVLAVRS), are a transit peptide targeting the mitochondrion. The Mn(2+) site is built by histidine 50, histidine 98, aspartate 179, and histidine 183.

Belongs to the iron/manganese superoxide dismutase family. Homotetramer. Mn(2+) serves as cofactor. Expressed in pharynx and rectum. Upon thermal stress, expressed in vulva, body wall muscles and hypodermis.

It localises to the mitochondrion. It catalyses the reaction 2 superoxide + 2 H(+) = H2O2 + O2. Functionally, destroys superoxide anion radicals which are normally produced within the cells and which are toxic to biological systems. This is Superoxide dismutase [Mn] 2, mitochondrial (sod-3) from Caenorhabditis elegans.